We begin with the raw amino-acid sequence, 499 residues long: Catalase (499 aa).

Residues 1 to 25 (MTDRPIMTTSAGAPIPDNQNSLTAG) form a disordered region. The span at 7–23 (MTTSAGAPIPDNQNSLT) shows a compositional bias: polar residues. Catalysis depends on residues histidine 55 and asparagine 127. Tyrosine 337 contributes to the heme binding site.

Belongs to the catalase family. As to quaternary structure, homotetramer. Heme is required as a cofactor.

The protein resides in the periplasm. It catalyses the reaction 2 H2O2 = O2 + 2 H2O. Functionally, decomposes hydrogen peroxide into water and oxygen; serves to protect cells from the toxic effects of hydrogen peroxide. The sequence is that of Catalase (katA) from Brucella abortus biovar 1 (strain 9-941).